A 78-amino-acid polypeptide reads, in one-letter code: MSEIASRVKAIIVDKLGVEESEVTTEASFTNDLGADSLDTVELIMEFEKEFGISIPDDQAEKIGTVGDAVSYIEANAK.

Residues 2-77 (SEIASRVKAI…DAVSYIEANA (76 aa)) enclose the Carrier domain. Ser-37 is subject to O-(pantetheine 4'-phosphoryl)serine.

The protein belongs to the acyl carrier protein (ACP) family. 4'-phosphopantetheine is transferred from CoA to a specific serine of apo-ACP by AcpS. This modification is essential for activity because fatty acids are bound in thioester linkage to the sulfhydryl of the prosthetic group.

The protein resides in the cytoplasm. The protein operates within lipid metabolism; fatty acid biosynthesis. In terms of biological role, carrier of the growing fatty acid chain in fatty acid biosynthesis. This chain is Acyl carrier protein, found in Phocaeicola vulgatus (strain ATCC 8482 / DSM 1447 / JCM 5826 / CCUG 4940 / NBRC 14291 / NCTC 11154) (Bacteroides vulgatus).